A 358-amino-acid polypeptide reads, in one-letter code: Mannonate dehydratase (358 aa).

It belongs to the mannonate dehydratase family. It depends on Fe(2+) as a cofactor. Mn(2+) is required as a cofactor.

It carries out the reaction D-mannonate = 2-dehydro-3-deoxy-D-gluconate + H2O. It functions in the pathway carbohydrate metabolism; pentose and glucuronate interconversion. Functionally, catalyzes the dehydration of D-mannonate. The sequence is that of Mannonate dehydratase from Lactococcus lactis subsp. lactis (strain IL1403) (Streptococcus lactis).